A 656-amino-acid chain; its full sequence is UvrABC system protein B (656 aa).

The Helicase ATP-binding domain occupies 23–180; it reads EGIKKGYRFQ…QHLAKIGYER (158 aa). 36 to 43 lines the ATP pocket; sequence GVTGSGKT. A Beta-hairpin motif is present at residues 89 to 112; sequence YYDYYQPEAYVPTKDLYIEKNADI. Residues 426–588 form the Helicase C-terminal domain; the sequence is QVDDLISEIK…ITPKTIVKPL (163 aa). A UVR domain is found at 614 to 649; sequence EEYLSLLEEEMYRAASELRYEDAAKLRDEIFRLREE.

The protein belongs to the UvrB family. In terms of assembly, forms a heterotetramer with UvrA during the search for lesions. Interacts with UvrC in an incision complex.

The protein resides in the cytoplasm. Functionally, the UvrABC repair system catalyzes the recognition and processing of DNA lesions. A damage recognition complex composed of 2 UvrA and 2 UvrB subunits scans DNA for abnormalities. Upon binding of the UvrA(2)B(2) complex to a putative damaged site, the DNA wraps around one UvrB monomer. DNA wrap is dependent on ATP binding by UvrB and probably causes local melting of the DNA helix, facilitating insertion of UvrB beta-hairpin between the DNA strands. Then UvrB probes one DNA strand for the presence of a lesion. If a lesion is found the UvrA subunits dissociate and the UvrB-DNA preincision complex is formed. This complex is subsequently bound by UvrC and the second UvrB is released. If no lesion is found, the DNA wraps around the other UvrB subunit that will check the other stand for damage. This is UvrABC system protein B from Pseudothermotoga lettingae (strain ATCC BAA-301 / DSM 14385 / NBRC 107922 / TMO) (Thermotoga lettingae).